The primary structure comprises 837 residues: Leucine-zipper-like transcriptional regulator 1 (837 aa).

An N-acetylalanine modification is found at alanine 2. Kelch repeat units lie at residues 76–125, 127–182, 184–235, 236–282, 292–338, and 396–447; these read AIYV…VYGS, MFVF…VYSD, LWIF…VCRD, KMFV…QRRY, HLYV…PERA, and AMYI…FVLG. A disordered region spans residues 324–352; the sequence is SSDSEVGGAEMPERASSSEDASTLTSEER. BTB domains follow at residues 440 to 534 and 664 to 733; these read CDVE…KYPR and CDIT…NMPP.

Belongs to the LZTR1 family. As to quaternary structure, homodimer. Component of the BCR(LZTR1) E3 ubiquitin ligase complex, at least composed of CUL3, LZTR1 and RBX1. Interacts with Ras (K-Ras/KRAS, N-Ras/NRAS and H-Ras/HRAS). Interacts with RAF1. Interacts with SHOC2. Interacts with PPP1CB. Phosphorylated on tyrosine upon induction of apoptosis, leading to its degradation by the proteasome. In terms of tissue distribution, widely expressed.

It localises to the endomembrane system. Its subcellular location is the recycling endosome. The protein localises to the golgi apparatus. It functions in the pathway protein modification; protein ubiquitination. Its function is as follows. Substrate-specific adapter of a BCR (BTB-CUL3-RBX1) E3 ubiquitin-protein ligase complex that mediates ubiquitination of Ras (K-Ras/KRAS, N-Ras/NRAS and H-Ras/HRAS). Is a negative regulator of RAS-MAPK signaling that acts by controlling Ras levels and decreasing Ras association with membranes. In Mus musculus (Mouse), this protein is Leucine-zipper-like transcriptional regulator 1.